Here is a 115-residue protein sequence, read N- to C-terminus: NADH-ubiquinone oxidoreductase chain 3 (115 aa).

3 helical membrane-spanning segments follow: residues 4–24, 55–75, and 86–106; these read FIVMMINIILSMSLIIIAFWL, FFLVAITFLLFDLEIALLLPL, and ITMLTAFILVTVLALGLAYEW.

The protein belongs to the complex I subunit 3 family. In terms of assembly, core subunit of respiratory chain NADH dehydrogenase (Complex I) which is composed of 45 different subunits. Interacts with TMEM186. Interacts with TMEM242.

The protein localises to the mitochondrion inner membrane. It catalyses the reaction a ubiquinone + NADH + 5 H(+)(in) = a ubiquinol + NAD(+) + 4 H(+)(out). Core subunit of the mitochondrial membrane respiratory chain NADH dehydrogenase (Complex I) which catalyzes electron transfer from NADH through the respiratory chain, using ubiquinone as an electron acceptor. Essential for the catalytic activity of complex I. This Reithrodontomys fulvescens (Fulvous harvest mouse) protein is NADH-ubiquinone oxidoreductase chain 3.